A 317-amino-acid chain; its full sequence is Acetyl-coenzyme A carboxylase carboxyl transferase subunit alpha (317 aa).

The region spanning 39–293 (RLESKAAAAL…GDALAEALTG (255 aa)) is the CoA carboxyltransferase C-terminal domain.

Belongs to the AccA family. In terms of assembly, acetyl-CoA carboxylase is a heterohexamer composed of biotin carboxyl carrier protein (AccB), biotin carboxylase (AccC) and two subunits each of ACCase subunit alpha (AccA) and ACCase subunit beta (AccD).

Its subcellular location is the cytoplasm. It carries out the reaction N(6)-carboxybiotinyl-L-lysyl-[protein] + acetyl-CoA = N(6)-biotinyl-L-lysyl-[protein] + malonyl-CoA. It participates in lipid metabolism; malonyl-CoA biosynthesis; malonyl-CoA from acetyl-CoA: step 1/1. Component of the acetyl coenzyme A carboxylase (ACC) complex. First, biotin carboxylase catalyzes the carboxylation of biotin on its carrier protein (BCCP) and then the CO(2) group is transferred by the carboxyltransferase to acetyl-CoA to form malonyl-CoA. This Methylobacterium nodulans (strain LMG 21967 / CNCM I-2342 / ORS 2060) protein is Acetyl-coenzyme A carboxylase carboxyl transferase subunit alpha.